A 387-amino-acid polypeptide reads, in one-letter code: Formate-dependent phosphoribosylglycinamide formyltransferase (387 aa).

N(1)-(5-phospho-beta-D-ribosyl)glycinamide is bound by residues 12 to 13 and Glu-72; that span reads EL. ATP-binding positions include Arg-104, Lys-145, 150 to 155, 185 to 188, and Glu-193; these read SSGKGQ and EEFI. An ATP-grasp domain is found at 109-300; sequence DLAAKDLKLL…EFELHIRAIL (192 aa). 2 residues coordinate Mg(2+): Glu-258 and Glu-270. N(1)-(5-phospho-beta-D-ribosyl)glycinamide-binding positions include Asp-277, Lys-348, and 355–356; that span reads RR.

It belongs to the PurK/PurT family. As to quaternary structure, homodimer.

The enzyme catalyses N(1)-(5-phospho-beta-D-ribosyl)glycinamide + formate + ATP = N(2)-formyl-N(1)-(5-phospho-beta-D-ribosyl)glycinamide + ADP + phosphate + H(+). The protein operates within purine metabolism; IMP biosynthesis via de novo pathway; N(2)-formyl-N(1)-(5-phospho-D-ribosyl)glycinamide from N(1)-(5-phospho-D-ribosyl)glycinamide (formate route): step 1/1. Functionally, involved in the de novo purine biosynthesis. Catalyzes the transfer of formate to 5-phospho-ribosyl-glycinamide (GAR), producing 5-phospho-ribosyl-N-formylglycinamide (FGAR). Formate is provided by PurU via hydrolysis of 10-formyl-tetrahydrofolate. The protein is Formate-dependent phosphoribosylglycinamide formyltransferase of Leptospira borgpetersenii serovar Hardjo-bovis (strain JB197).